We begin with the raw amino-acid sequence, 353 residues long: Glutamine synthetase cytosolic isozyme 1-5 (353 aa).

Residue Thr2 is modified to N-acetylthreonine. At Ser3 the chain carries Phosphoserine. Residues 19–99 enclose the GS beta-grasp domain; sequence IIAEYIWIGG…VMCDAYRPAG (81 aa). One can recognise a GS catalytic domain in the interval 106–353; sequence NRHKAVKIFD…TSMIAETTIL (248 aa).

The protein belongs to the glutamine synthetase family. In terms of assembly, homooctamer. In terms of tissue distribution, not expressed in roots.

The protein localises to the cytoplasm. The catalysed reaction is L-glutamate + NH4(+) + ATP = L-glutamine + ADP + phosphate + H(+). The protein is Glutamine synthetase cytosolic isozyme 1-5 (GLN1-5) of Arabidopsis thaliana (Mouse-ear cress).